A 260-amino-acid chain; its full sequence is HLA class II histocompatibility antigen, DP alpha 1 chain (260 aa).

The N-terminal stretch at Met-1–Gly-28 is a signal peptide. The interval Ala-29 to Asn-115 is alpha-1. At Ala-29–Glu-222 the chain is on the extracellular side. Residues Asn-109 and Asn-149 are each glycosylated (N-linked (GlcNAc...) asparagine). The segment at Asp-116–Trp-209 is alpha-2. An Ig-like C1-type domain is found at Pro-118–Glu-210. The cysteines at positions 138 and 194 are disulfide-linked. Residues Glu-210–Glu-222 are connecting peptide. The helical transmembrane segment at Thr-223–Ile-245 threads the bilayer. The Cytoplasmic portion of the chain corresponds to Lys-246 to Leu-260.

This sequence belongs to the MHC class II family. In terms of assembly, heterodimer of an alpha and a beta subunit; also referred as MHC class II molecule. In the endoplasmic reticulum (ER) it forms a heterononamer; 3 MHC class II molecules bind to a CD74 homotrimer (also known as invariant chain or HLA class II histocompatibility antigen gamma chain). In the endosomal/lysosomal system; CD74 undergoes sequential degradation by various proteases; leaving a small fragment termed CLIP on each MHC class II molecule. MHC class II molecule interacts with HLA_DM, and HLA_DO in B-cells, in order to release CLIP and facilitate the binding of antigenic peptides.

The protein resides in the cell membrane. It localises to the endoplasmic reticulum membrane. Its subcellular location is the golgi apparatus. It is found in the trans-Golgi network membrane. The protein localises to the endosome membrane. The protein resides in the lysosome membrane. Functionally, binds peptides derived from antigens that access the endocytic route of antigen presenting cells (APC) and presents them on the cell surface for recognition by the CD4 T-cells. The peptide binding cleft accommodates peptides of 10-30 residues. The peptides presented by MHC class II molecules are generated mostly by degradation of proteins that access the endocytic route, where they are processed by lysosomal proteases and other hydrolases. Exogenous antigens that have been endocytosed by the APC are thus readily available for presentation via MHC II molecules, and for this reason this antigen presentation pathway is usually referred to as exogenous. As membrane proteins on their way to degradation in lysosomes as part of their normal turn-over are also contained in the endosomal/lysosomal compartments, exogenous antigens must compete with those derived from endogenous components. Autophagy is also a source of endogenous peptides, autophagosomes constitutively fuse with MHC class II loading compartments. In addition to APCs, other cells of the gastrointestinal tract, such as epithelial cells, express MHC class II molecules and CD74 and act as APCs, which is an unusual trait of the GI tract. To produce a MHC class II molecule that presents an antigen, three MHC class II molecules (heterodimers of an alpha and a beta chain) associate with a CD74 trimer in the ER to form a heterononamer. Soon after the entry of this complex into the endosomal/lysosomal system where antigen processing occurs, CD74 undergoes a sequential degradation by various proteases, including CTSS and CTSL, leaving a small fragment termed CLIP (class-II-associated invariant chain peptide). The removal of CLIP is facilitated by HLA-DM via direct binding to the alpha-beta-CLIP complex so that CLIP is released. HLA-DM stabilizes MHC class II molecules until primary high affinity antigenic peptides are bound. The MHC II molecule bound to a peptide is then transported to the cell membrane surface. In B-cells, the interaction between HLA-DM and MHC class II molecules is regulated by HLA-DO. Primary dendritic cells (DCs) also to express HLA-DO. Lysosomal microenvironment has been implicated in the regulation of antigen loading into MHC II molecules, increased acidification produces increased proteolysis and efficient peptide loading. The polypeptide is HLA class II histocompatibility antigen, DP alpha 1 chain (HLA-DPA1) (Homo sapiens (Human)).